The primary structure comprises 475 residues: MSPKTETKASVGFKAGVKDYRLTYYTPEYQTKDTDILAAFRVTPQPGVPPEEAGAAVAAESSTGTWTTVWTDGLTSLDRYKGRCYDIEPVPGEESQFIAYVAYPLDLFEEGSVTNLFTSIVGNVFGFKALRALRLEDLRIPPAYSKTFQGPPHGIQVERDKLNKYGRPLLGCTIKPKLGLSAKNYGRAVYECLRGGLDFTKDDENVNSQPFMRWRDRFVFCAEALYKAQAETGEIKGHYLNATAGTCEEMMKRAVFARELGVPIVMHDYLTGGFTANTTLAHYCRDNGLLLHIHRAMHAVIDRQRNHGMHFRVLAKALRMSGGDHIHAGTVVGKLEGEREVTLGFVDLLRDNYIEKDRSRGIYFTQDWVSMPGVLPVASGGIHVWHMPALTEIFGDDSVLQFGGGTLGHPWGNAPGAVANRVALEACVQARNEGRDLAREGNEVVREACKWSPELAAACEVWKEIKFEFDTIDYL.

A propeptide spanning residues 1–2 (MS) is cleaved from the precursor. Pro-3 bears the N-acetylproline mark. Lys-14 is modified (N6,N6,N6-trimethyllysine). Residues Asn-123 and Thr-173 each contribute to the substrate site. The active-site Proton acceptor is the Lys-175. Substrate is bound at residue Lys-177. Residues Lys-201, Asp-203, and Glu-204 each coordinate Mg(2+). Position 201 is an N6-carboxylysine (Lys-201). His-294 functions as the Proton acceptor in the catalytic mechanism. 3 residues coordinate substrate: Arg-295, His-327, and Ser-379.

It belongs to the RuBisCO large chain family. Type I subfamily. In terms of assembly, heterohexadecamer of 8 large chains and 8 small chains; disulfide-linked. The disulfide link is formed within the large subunit homodimers. It depends on Mg(2+) as a cofactor. In terms of processing, the disulfide bond which can form in the large chain dimeric partners within the hexadecamer appears to be associated with oxidative stress and protein turnover.

The protein localises to the plastid. Its subcellular location is the chloroplast. The enzyme catalyses 2 (2R)-3-phosphoglycerate + 2 H(+) = D-ribulose 1,5-bisphosphate + CO2 + H2O. It carries out the reaction D-ribulose 1,5-bisphosphate + O2 = 2-phosphoglycolate + (2R)-3-phosphoglycerate + 2 H(+). Its function is as follows. RuBisCO catalyzes two reactions: the carboxylation of D-ribulose 1,5-bisphosphate, the primary event in carbon dioxide fixation, as well as the oxidative fragmentation of the pentose substrate in the photorespiration process. Both reactions occur simultaneously and in competition at the same active site. The sequence is that of Ribulose bisphosphate carboxylase large chain from Tsuga heterophylla (Western hemlock).